The following is a 436-amino-acid chain: Septin-7 (436 aa).

Position 2 is an N-acetylserine (Ser2). Phosphotyrosine is present on Tyr29. The Septin-type G domain occupies 46-315 (RGFEFTLMVV…ENYRSRKLAA (270 aa)). Positions 46–316 (RGFEFTLMVV…NYRSRKLAAV (271 aa)) are interaction with SEPTIN12. Residues 56-63 (GESGLGKS) form a G1 motif region. A GTP-binding site is contributed by 56 to 63 (GESGLGKS). A Phosphoserine modification is found at Ser76. GTP is bound by residues Thr89, Gly115, and 194–202 (KADTLTPEE). The tract at residues 112-115 (DTPG) is G3 motif. Residues 193-196 (AKAD) are G4 motif. Thr227 carries the phosphothreonine modification. GTP is bound by residues Gly249 and Arg264. Residues 331-436 (TKSPLAQMEE…EKNKKKGKIF (106 aa)) are a coiled coil. Ser333 carries the phosphoserine modification. Lys372 is modified (N6-acetyllysine). The segment covering 377-409 (ELQRRHEQMKKNLEAQHKELEEKRRQFEEEKAN) has biased composition (basic and acidic residues). The disordered stretch occupies residues 377–436 (ELQRRHEQMKKNLEAQHKELEEKRRQFEEEKANWEAQQRILEQQNSSRTLEKNKKKGKIF). Residue Ser423 is modified to Phosphoserine. Thr425 carries the phosphothreonine modification.

The protein belongs to the TRAFAC class TrmE-Era-EngA-EngB-Septin-like GTPase superfamily. Septin GTPase family. Septins polymerize into heterooligomeric protein complexes that form filaments, and associate with cellular membranes, actin filaments and microtubules. GTPase activity is required for filament formation. Filaments are assembled from asymmetrical heterotrimers, composed of SEPTIN2, SEPTIN6 and SEPTIN7 that associate head-to-head to form a hexameric unit. Within the trimer, directly interacts with SEPTIN6, while interaction with SEPTIN2 seems indirect. In the absence of SEPTIN6, forms homodimers. Interacts directly with CENPE and links CENPE to septin filaments composed of SEPTIN2, SEPTIN6 and SEPTIN7. Interacts with SEPTIN5. Component of a septin core octameric complex consisting of SEPTIN12, SEPTIN7, SEPTIN6 and SEPTIN2 or SEPTIN4 in the order 12-7-6-2-2-6-7-12 or 12-7-6-4-4-6-7-12 and located in the sperm annulus; the SEPTIN12:SEPTIN7 association is mediated by the respective GTP-binding domains. Interacts with SEPTIN2, SEPTIN7, SEPTIN8, SEPTIN9 and SEPTIN11.

It localises to the cytoplasm. The protein localises to the chromosome. It is found in the centromere. The protein resides in the kinetochore. Its subcellular location is the cytoskeleton. It localises to the spindle. The protein localises to the cleavage furrow. It is found in the midbody. The protein resides in the cilium axoneme. Its subcellular location is the cell projection. It localises to the cilium. The protein localises to the flagellum. Functionally, filament-forming cytoskeletal GTPase. Required for normal organization of the actin cytoskeleton. Required for normal progress through mitosis. Involved in cytokinesis. Required for normal association of CENPE with the kinetochore. Plays a role in ciliogenesis and collective cell movements. Forms a filamentous structure with SEPTIN12, SEPTIN6, SEPTIN2 and probably SEPTIN4 at the sperm annulus which is required for the structural integrity and motility of the sperm tail during postmeiotic differentiation. The chain is Septin-7 from Rattus norvegicus (Rat).